Here is a 445-residue protein sequence, read N- to C-terminus: Homoserine dehydrogenase (445 aa).

Residues phenylalanine 26, threonine 28, and valine 29 each contribute to the NADPH site. Positions 29 and 58 each coordinate NAD(+). Position 29 (valine 29) interacts with NADP(+). An NADPH-binding site is contributed by lysine 119. Lysine 119 serves as a coordination point for NADP(+). Na(+) is bound by residues glutamate 143, valine 146, glycine 148, and isoleucine 150. NADP(+) is bound by residues glycine 201 and glutamate 204. L-homoserine contacts are provided by glutamate 204 and aspartate 215. Catalysis depends on lysine 219, which acts as the Proton donor. Glycine 321 is an NADPH binding site. An NAD(+)-binding site is contributed by glycine 321. Glycine 321 serves as a coordination point for NADP(+). The ACT domain occupies 368-445 (HLDMDVEDRV…INSVIRLERD (78 aa)).

Belongs to the homoserine dehydrogenase family. It depends on a metal cation as a cofactor.

The enzyme catalyses L-homoserine + NADP(+) = L-aspartate 4-semialdehyde + NADPH + H(+). It carries out the reaction L-homoserine + NAD(+) = L-aspartate 4-semialdehyde + NADH + H(+). Its pathway is amino-acid biosynthesis; L-methionine biosynthesis via de novo pathway; L-homoserine from L-aspartate: step 3/3. It functions in the pathway amino-acid biosynthesis; L-threonine biosynthesis; L-threonine from L-aspartate: step 3/5. Its activity is regulated as follows. Feedback inhibition by threonine. In terms of biological role, catalyzes the conversion of L-aspartate-beta-semialdehyde (L-Asa) to L-homoserine (L-Hse), the third step in the biosynthesis of threonine and methionine from aspartate. In Corynebacterium glutamicum (strain ATCC 13032 / DSM 20300 / JCM 1318 / BCRC 11384 / CCUG 27702 / LMG 3730 / NBRC 12168 / NCIMB 10025 / NRRL B-2784 / 534), this protein is Homoserine dehydrogenase (hom).